Reading from the N-terminus, the 457-residue chain is MSKRYAVVLAAGQGTRMKSKLYKVLHPVCGKPMVEHVVDQISTLNVDKVVTIVGHGAEKVQEHLAGKSEFVKQEEQLGTAHAVLQAKAELAGKDGVTLVVCGDTPLIEASTMEALLKYHHEKRAKATILTTVIEDPTGYGRIIRDDLGIVEKIVEHKDATEKEQRISEINTGTYCFDNKALFEALENVSNDNVQGEYYLPDVIKILKDSDEVVAAYRMESFEESLGVNDRIALAEASKLMQRRINENHMRNGVTLVNPESTYIDIDVKIGQDTVIEPGVMLRGKTVIGDDCVVTSGSEIVNSVIGERVHVRTSSIFESKVGDDVQIGPYAHLRPESDIHDNVKIGNYVETKKAVVGEGTKLPHFIYMGDAEIGKNVNVGCGSIAVNYDGKNKAKTIIGDNVFVGCNSNLIAPVKVGDRAFIAAGSTITKDVPDDALGIARAKQDNKLGYAKHLNHGK.

The interval M1–R230 is pyrophosphorylase. UDP-N-acetyl-alpha-D-glucosamine contacts are provided by residues L9–G12, K23, Q73, and G78–T79. A Mg(2+)-binding site is contributed by D103. The UDP-N-acetyl-alpha-D-glucosamine site is built by G140, E155, N170, and N228. N228 lines the Mg(2+) pocket. The tract at residues I231–N251 is linker. The interval G252–K457 is N-acetyltransferase. The UDP-N-acetyl-alpha-D-glucosamine site is built by R333 and K351. H363 acts as the Proton acceptor in catalysis. Residues Y366 and N377 each coordinate UDP-N-acetyl-alpha-D-glucosamine. Acetyl-CoA-binding positions include N386–Y387, A423, and R440.

The protein in the N-terminal section; belongs to the N-acetylglucosamine-1-phosphate uridyltransferase family. This sequence in the C-terminal section; belongs to the transferase hexapeptide repeat family. In terms of assembly, homotrimer. It depends on Mg(2+) as a cofactor.

The protein resides in the cytoplasm. It carries out the reaction alpha-D-glucosamine 1-phosphate + acetyl-CoA = N-acetyl-alpha-D-glucosamine 1-phosphate + CoA + H(+). It catalyses the reaction N-acetyl-alpha-D-glucosamine 1-phosphate + UTP + H(+) = UDP-N-acetyl-alpha-D-glucosamine + diphosphate. Its pathway is nucleotide-sugar biosynthesis; UDP-N-acetyl-alpha-D-glucosamine biosynthesis; N-acetyl-alpha-D-glucosamine 1-phosphate from alpha-D-glucosamine 6-phosphate (route II): step 2/2. It functions in the pathway nucleotide-sugar biosynthesis; UDP-N-acetyl-alpha-D-glucosamine biosynthesis; UDP-N-acetyl-alpha-D-glucosamine from N-acetyl-alpha-D-glucosamine 1-phosphate: step 1/1. The protein operates within bacterial outer membrane biogenesis; LPS lipid A biosynthesis. In terms of biological role, catalyzes the last two sequential reactions in the de novo biosynthetic pathway for UDP-N-acetylglucosamine (UDP-GlcNAc). The C-terminal domain catalyzes the transfer of acetyl group from acetyl coenzyme A to glucosamine-1-phosphate (GlcN-1-P) to produce N-acetylglucosamine-1-phosphate (GlcNAc-1-P), which is converted into UDP-GlcNAc by the transfer of uridine 5-monophosphate (from uridine 5-triphosphate), a reaction catalyzed by the N-terminal domain. The polypeptide is Bifunctional protein GlmU (Listeria monocytogenes serotype 4a (strain HCC23)).